We begin with the raw amino-acid sequence, 434 residues long: tRNA dimethylallyltransferase (434 aa).

Residue 10–17 (GTTGAGKS) coordinates ATP. Position 12–17 (12–17 (TGAGKS)) interacts with substrate. 2 interaction with substrate tRNA regions span residues 35–38 (DSMQ) and 166–170 (RKIRR). Positions 211–233 (SLVLMPRLDKRVDKMLSHGLVDE) are interaction with isopentenylpyrophosphate transferase. Interaction with substrate tRNA stretches follow at residues 256 to 258 (QCI), 281 to 299 (RMKV…WIQS), and 291 to 298 (KSQKKWIQ). The segment at 380-416 (FVCEECLDKRGDPFTVIGEDAFNVHIKSRKHKTTVRR) adopts a Matrin-type zinc-finger fold.

It belongs to the IPP transferase family.

The protein resides in the mitochondrion. It is found in the cytoplasm. Its subcellular location is the nucleus. The catalysed reaction is adenosine(37) in tRNA + dimethylallyl diphosphate = N(6)-dimethylallyladenosine(37) in tRNA + diphosphate. Functionally, catalyzes the transfer of a dimethylallyl group onto the adenine at position 37 of both cytosolic and mitochondrial tRNAs, leading to the formation of N6-(dimethylallyl)adenosine (i(6)A). The sequence is that of tRNA dimethylallyltransferase (tit1) from Schizosaccharomyces pombe (strain 972 / ATCC 24843) (Fission yeast).